Consider the following 117-residue polypeptide: DNA-directed RNA polymerase subunit omega (117 aa).

The segment covering 96 to 105 (KEEAEEEAKQ) has biased composition (basic and acidic residues). Positions 96 to 117 (KEEAEEEAKQKNSRAAKAAAAE) are disordered. A compositionally biased stretch (low complexity) spans 108-117 (SRAAKAAAAE).

Belongs to the RNA polymerase subunit omega family. In terms of assembly, the RNAP catalytic core consists of 2 alpha, 1 beta, 1 beta' and 1 omega subunit. When a sigma factor is associated with the core the holoenzyme is formed, which can initiate transcription.

The enzyme catalyses RNA(n) + a ribonucleoside 5'-triphosphate = RNA(n+1) + diphosphate. Promotes RNA polymerase assembly. Latches the N- and C-terminal regions of the beta' subunit thereby facilitating its interaction with the beta and alpha subunits. The sequence is that of DNA-directed RNA polymerase subunit omega (rpoZ) from Lactococcus lactis subsp. lactis (strain IL1403) (Streptococcus lactis).